Here is a 465-residue protein sequence, read N- to C-terminus: Gamma-aminobutyric acid receptor subunit rho-2 (465 aa).

Positions 1–20 are cleaved as a signal peptide; the sequence is MPYLMRLALVLFCLMALVES. At 21–260 the chain is on the extracellular side; that stretch reads RKPRRKRWTG…LYINFTLRRH (240 aa). Residue Arg-105 participates in 4-aminobutanoate binding. An N-linked (GlcNAc...) asparagine glycan is attached at Asn-120. Position 169 (Ser-169) interacts with 4-aminobutanoate. Cysteines 178 and 192 form a disulfide. Glu-197 is a 4-aminobutanoate binding site. N-linked (GlcNAc...) asparagine glycosylation occurs at Asn-254. A helical membrane pass occupies residues 261-281; it reads IFFFLLQTYFPATLMVMLSWV. Over 282 to 293 the chain is Cytoplasmic; that stretch reads SFWIDHRAVPAR. Residues 294–314 form a helical membrane-spanning segment; sequence VSLGIMTVLTMSTIITGVNAS. Over 315–325 the chain is Extracellular; the sequence is MPRVSYIRAVD. The helical transmembrane segment at 326–346 threads the bilayer; the sequence is IYLWVSFVFVFLSVLEYAAVN. Residues 347-443 are Cytoplasmic-facing; the sequence is YLTTLQEQKE…IFQNTHAIDK (97 aa). Residues 444-464 traverse the membrane as a helical segment; the sequence is YSRLIFPAFYIVFNLIYWSVF. A topological domain (extracellular) is located at residue Ser-465.

It belongs to the ligand-gated ion channel (TC 1.A.9) family. Gamma-aminobutyric acid receptor (TC 1.A.9.5) subfamily. GABRR2 sub-subfamily. As to quaternary structure, three rho subunits (rho-1/GBRR1, rho-2/GBRR2 and rho-3/GBRR3) coassemble either to form functional homopentamers or heteropentamers. Rho-2 is unable to form a functional homopentamer. Interacts with SQSTM1. As to expression, expressed in the cerebellum.

It is found in the postsynaptic cell membrane. Its subcellular location is the cell membrane. The catalysed reaction is chloride(in) = chloride(out). Functionally, rho subunit of the pentameric ligand-gated chloride channels responsible for mediating the effects of gamma-aminobutyric acid (GABA), the major inhibitory neurotransmitter in the brain. Rho-containing GABA-gated chloride channels are a subclass of GABA(A) receptors (GABAARs) entirely composed of rho subunits, where GABA molecules bind at the rho intersubunit interfaces. When activated by GABA, rho-GABAARs selectively allow the flow of chloride anions across the cell membrane down their electrochemical gradient. Rho-2 GABAARs may contribute to the regulation of glial development in the cerebellum by controlling extrasynaptic transmission. Rho-2 GABAARs are also involved in neuronal tonic (extrasynaptic) and phasic (synaptic) transmission in the Purkinje neurons of the cerebellum. Rho-2 GABAARs expressed in retina may play a role in retinal neurotransmission. This chain is Gamma-aminobutyric acid receptor subunit rho-2, found in Mus musculus (Mouse).